We begin with the raw amino-acid sequence, 246 residues long: Dolichol-phosphate mannosyltransferase subunit 1 (246 aa).

GDP-alpha-D-mannose is bound by residues Pro-20, Tyr-22, Glu-24, Val-49, Asp-51, Asp-104, Ala-105, Asp-106, Arg-133, Arg-220, and Lys-226. Asp-106 contacts Mg(2+). Position 106 (Asp-106) interacts with Mn(2+).

This sequence belongs to the glycosyltransferase 2 family. Component of the dolichol-phosphate mannose (DPM) synthase complex composed of DPMS1, DPMS2 and DPMS3; in the complex interacts directly with DPMS3. Mg(2+) serves as cofactor. It depends on Mn(2+) as a cofactor. The cofactor is Ca(2+).

Its subcellular location is the endoplasmic reticulum membrane. It carries out the reaction a di-trans,poly-cis-dolichyl phosphate + GDP-alpha-D-mannose = a di-trans,poly-cis-dolichyl beta-D-mannosyl phosphate + GDP. It functions in the pathway protein modification; protein glycosylation. In terms of biological role, transfers mannose from GDP-mannose to dolichol monophosphate to form dolichol phosphate mannose (Dol-P-Man) which is the mannosyl donor in pathways leading to N-glycosylation, glycosyl phosphatidylinositol membrane anchoring, and O-mannosylation of proteins; catalytic subunit of the dolichol-phosphate mannose (DPM) synthase complex. Plays a role in plant development and physiology, sensitivity to ammonium stress and endoplasmic reticulum stress response. The sequence is that of Dolichol-phosphate mannosyltransferase subunit 1 from Arabidopsis thaliana (Mouse-ear cress).